The primary structure comprises 316 residues: Ribosomal RNA small subunit methyltransferase H (316 aa).

S-adenosyl-L-methionine-binding positions include 35 to 37 (SGH), aspartate 55, phenylalanine 84, aspartate 105, and glutamine 112.

This sequence belongs to the methyltransferase superfamily. RsmH family.

Its subcellular location is the cytoplasm. The enzyme catalyses cytidine(1402) in 16S rRNA + S-adenosyl-L-methionine = N(4)-methylcytidine(1402) in 16S rRNA + S-adenosyl-L-homocysteine + H(+). Its function is as follows. Specifically methylates the N4 position of cytidine in position 1402 (C1402) of 16S rRNA. This chain is Ribosomal RNA small subunit methyltransferase H, found in Streptococcus equi subsp. equi (strain 4047).